Reading from the N-terminus, the 286-residue chain is MTLKQKWDVYSRLTRIDRPIGTLLLLWPCLMALMLAAGGMPDLKVLVIFIIGVVIMRACGCIINDYADRDLDSFVERTRSRPLASGEISTKEALILFVILGLSAFGLVLLLNGLVVKLSVVGIILTIIYPFTKRITNMPQMFLGIVWSWSIPMAYAAQTGEVPMEAWWLFAANWCWTVAYDTMYAMVDRDDDLKVGIKSTAILFGKYDRQIIGLFQLAALACFIAAGWSADRGLLYGLGILTFVGFSTYQQMLIFDRERAPCFKAFLNNNWAGLALFVGLGADYLI.

A run of 7 helical transmembrane segments spans residues 21–40 (GTLLLLWPCLMALMLAAGGM), 95–115 (ILFVILGLSAFGLVLLLNGLV), 142–162 (FLGIVWSWSIPMAYAAQTGEV), 167–187 (WWLFAANWCWTVAYDTMYAMV), 210–230 (QIIGLFQLAALACFIAAGWSA), 235–255 (LYGLGILTFVGFSTYQQMLIF), and 266–286 (FLNNNWAGLALFVGLGADYLI).

The protein belongs to the UbiA prenyltransferase family. Mg(2+) is required as a cofactor.

Its subcellular location is the cell inner membrane. The catalysed reaction is all-trans-octaprenyl diphosphate + 4-hydroxybenzoate = 4-hydroxy-3-(all-trans-octaprenyl)benzoate + diphosphate. It functions in the pathway cofactor biosynthesis; ubiquinone biosynthesis. In terms of biological role, catalyzes the prenylation of para-hydroxybenzoate (PHB) with an all-trans polyprenyl group. Mediates the second step in the final reaction sequence of ubiquinone-8 (UQ-8) biosynthesis, which is the condensation of the polyisoprenoid side chain with PHB, generating the first membrane-bound Q intermediate 3-octaprenyl-4-hydroxybenzoate. This chain is 4-hydroxybenzoate octaprenyltransferase, found in Shewanella baltica (strain OS185).